The following is a 230-amino-acid chain: Sodium channel modifier 1 (230 aa).

Ser2 is modified (phosphoserine). The Bipartite nuclear localization signal motif lies at 4-20 (KREGDDWSQLNVLKKRR). The Matrin-type zinc finger occupies 42–74 (FACAICPHRPVLDTLAMLTAHRAGKKHLSSLQL). Lys67 is covalently cross-linked (Glycyl lysine isopeptide (Lys-Gly) (interchain with G-Cter in SUMO2)). Disordered stretches follow at residues 76-106 (YGKKQPGKERKQNPKHQNELRREETKAEAPL), 129-186 (RRKY…SPTR), and 200-230 (GWIPDGRGRWVKDENVEFDSDEEEPPDLPLD). The segment covering 81–102 (PGKERKQNPKHQNELRREETKA) has biased composition (basic and acidic residues). Residue Ser144 is modified to Phosphoserine. A compositionally biased stretch (low complexity) spans 164–174 (PAAGPQAEESA). Ser183 carries the post-translational modification Phosphoserine. Residues 188–230 (RALDHYLTLRSSGWIPDGRGRWVKDENVEFDSDEEEPPDLPLD) are required for interaction with LUC7L2. Positions 205–214 (GRGRWVKDEN) are enriched in basic and acidic residues. The segment covering 215–230 (VEFDSDEEEPPDLPLD) has biased composition (acidic residues). Ser219 is subject to Phosphoserine.

In terms of assembly, component of the minor spliceosome, which splices U12-type introns. Within this complex, interacts with RNF113A, as well as with SF3B1/SF3b155, SF3B2/SF3b145, SF3B3/SF3b130 and CDC5L. May interact with LUC7L2 and SNRNP70.

The protein localises to the nucleus. It localises to the nucleoplasm. It is found in the nucleus speckle. As a component of the minor spliceosome, involved in the splicing of U12-type introns in pre-mRNAs. Plays a role in the regulation of primary cilia length and Hedgehog signaling. The chain is Sodium channel modifier 1 (SCNM1) from Homo sapiens (Human).